An 811-amino-acid polypeptide reads, in one-letter code: MTTFCRVLLIFGIYVAVSCAQSVEDDVFHFTNPSQGNAVWILDESSLPWTGGYQFLRSISGMPTTLLSIVDSSTGVTLGQCVAPQDATGNFSKRWEKFSWELTASGLDCQFEQGAATRVEFDRSQNPRTFSIRIQSITGPACLRDVVVQTEQATGCPPHLSRNSFTANALNCSCPYLDAANEDGETENEDVDMLANSPQFPLFKVVDPSVLGSANPPTLPPSPCANHECHNNGTCLVSQEGAAMCLCRNGFTGDRCELDVCSAVPCQNGGVCRSNNGIAYCECPPAFSGLLCESAHTDESAAPICNPECSNGQCVLKDGQPQCECRQGFTGANCNVLDVCLGDAACSMFGPSAKCVLDDNMDKMSSASLINGTYDCLCPHPIHGQFVDCMQLHAPSATSVQPSEPAVVINNVTPSFPVLEISQVPTGAPKTFTATSTTSVATQPAVPVVQTLPTTQQVPSEPFVGFTVTREPLRPFEATTTTTLPPPFQQHIITAGEQPTWSSQQPQQPSEVPVPAQTMTTFIFPQTPETTTFPPTTGATVHKFVSPNMPDENEEEEEDETTDETEETFPTPSTMQVATDSSIRSEFFTSTFPTTTDMEETDEEEDMTEEVTDSSTQPSTTVFIQPSSTTFTTEAPTTTMEEEETTEQEEIESEEAISTTTQTSLPFWMTTIAIKMPDIVASPTPMIIMPHPQPEEKMETSTEGIESEEERTTESNEEIIPKNMEPTTPSDITHHHTSSGKQSSAVASWIIATIALIVLGSLLLATSLFVLRYIRQSRKLHGKYNPAREEHNLSAAYAMPMSHIAKEERLI.

The N-terminal stretch at 1–20 is a signal peptide; it reads MTTFCRVLLIFGIYVAVSCA. Residues 21–749 are Extracellular-facing; that stretch reads QSVEDDVFHF…GKQSSAVASW (729 aa). Residues Asn90, Asn171, and Asn232 are each glycosylated (N-linked (GlcNAc...) asparagine). 3 consecutive EGF-like domains span residues 220–257, 258–293, and 301–335; these read PPSP…DRCE, LDVC…LLCE, and AAPI…ANCN. Disulfide bonds link Cys224–Cys235, Cys229–Cys245, Cys247–Cys256, Cys261–Cys272, Cys266–Cys281, Cys283–Cys292, Cys305–Cys314, Cys309–Cys323, and Cys325–Cys334. Asn371 carries an N-linked (GlcNAc...) asparagine glycan. 3 disordered regions span residues 544–579, 592–659, and 690–739; these read FVSP…QVAT, FPTT…AIST, and PHPQ…HTSS. Acidic residues predominate over residues 551–567; sequence DENEEEEEDETTDETEE. Positions 570–579 are enriched in polar residues; the sequence is PTPSTMQVAT. Residues 597–612 are compositionally biased toward acidic residues; sequence DMEETDEEEDMTEEVT. Positions 626-639 are enriched in low complexity; the sequence is PSSTTFTTEAPTTT. Composition is skewed to acidic residues over residues 640-655 and 705-717; these read MEEE…ESEE and IESE…ESNE. Residues 750-770 traverse the membrane as a helical segment; sequence IIATIALIVLGSLLLATSLFV. Residues 771–811 lie on the Cytoplasmic side of the membrane; sequence LRYIRQSRKLHGKYNPAREEHNLSAAYAMPMSHIAKEERLI.

The protein localises to the membrane. Regulates pharyngeal pumping during feeding. This chain is Abnormal pharyngeal pumping eat-20 (eat-20), found in Caenorhabditis briggsae.